A 265-amino-acid polypeptide reads, in one-letter code: Apolipoprotein A-I (265 aa).

The first 20 residues, 1–20, serve as a signal peptide directing secretion; it reads METKAVVLTLAVLFLTGSQA. 2 tandem repeats follow at residues 69–90 and 91–112. The interval 69–265 is 10 X approximate tandem repeats; it reads LKILDNWDTL…DEATKKLNSQ (197 aa). One copy of the 3; half-length repeat lies at 113 to 123; sequence KDLEELKQKVQ. A run of 5 repeats spans residues 124-145, 146-167, 168-189, 190-209, and 210-230. Methionine 195 carries the methionine sulfoxide modification. Residues 231–241 form a 9; half-length repeat; the sequence is PALEDFRQGLM. A Methionine sulfoxide modification is found at methionine 241. Repeat unit 10 spans residues 242–265; it reads PVLEGFQKSVLAALDEATKKLNSQ.

It belongs to the apolipoprotein A1/A4/E family. Homodimer. Interacts with APOA1BP and CLU. Component of a sperm activating protein complex (SPAP), consisting of APOA1, an immunoglobulin heavy chain, an immunoglobulin light chain and albumin. Interacts with NDRG1. Interacts with SCGB3A2. Interacts with NAXE and YJEFN3. In terms of processing, glycosylated. Palmitoylated. Post-translationally, phosphorylation sites are present in the extracellular medium. As to expression, major protein of plasma HDL, also found in chylomicrons.

The protein localises to the secreted. In terms of biological role, participates in the reverse transport of cholesterol from tissues to the liver for excretion by promoting cholesterol efflux from tissues and by acting as a cofactor for the lecithin cholesterol acyltransferase (LCAT). As part of the SPAP complex, activates spermatozoa motility. The chain is Apolipoprotein A-I (APOA1) from Orycteropus afer (Aardvark).